A 300-amino-acid polypeptide reads, in one-letter code: Neutral protease NprE (300 aa).

Asp139 is a Ca(2+) binding site. His143 is a Zn(2+) binding site. Residue Glu144 is part of the active site. Zn(2+) contacts are provided by His147 and Glu167. The Ca(2+) site is built by Asp178, Asp181, Asp183, and Glu186. The active-site Proton donor is His228.

The protein belongs to the peptidase M4 family. Requires Ca(2+) as cofactor. Zn(2+) serves as cofactor.

The protein resides in the secreted. It carries out the reaction Similar, but not identical, to that of thermolysin.. Extracellular zinc metalloprotease. The protein is Neutral protease NprE (nprE) of Bacillus pumilus (Bacillus mesentericus).